The following is a 182-amino-acid chain: ATP synthase subunit delta, mitochondrial (182 aa).

Residues Met1 to Leu17 constitute a mitochondrion transit peptide.

This sequence belongs to the ATPase epsilon chain family. As to quaternary structure, F-type ATPases have 2 components, F(1) - the catalytic core - and F(o) - the membrane proton channel. F(1) has five subunits: alpha(3), beta(3), gamma(1), delta(1), epsilon(1), plus the additional subunit P18 (Tb427.05.1710) that is not present in F(1)F(o) ATP synthase from metazoa. Subunit P18 (Tb927.5.1710) interacts with the alpha subunit with a 1:1 stoichiometry; the interaction is direct. Subunit gamma is part of the central stalk. F(o) has three main subunits: a, b and c. The trypanosomal ATPase complex contains additional subunits that are not present in the F(1)F(o) ATP synthase from metazoa.

Its subcellular location is the mitochondrion. It is found in the mitochondrion inner membrane. Its function is as follows. Mitochondrial membrane ATP synthase (F(1)F(o) ATP synthase) produces ATP from ADP in the presence of a proton gradient across the membrane which is generated by electron transport complexes of the respiratory chain. F-type ATPases consist of two structural domains, F(1) - containing the extramembraneous catalytic core, and F(o) - containing the membrane proton channel, linked together by a central stalk and a peripheral stalk. During catalysis, ATP synthesis in the catalytic domain of F(1) is coupled via a rotary mechanism of the central stalk subunits to proton translocation. Subunits alpha and beta form the catalytic core in F(1). Rotation of the central stalk against the surrounding alpha(3)beta(3) subunits leads to hydrolysis of ATP in three separate catalytic sites on the beta subunits. Contrary to the procyclic, insect form that requires F(1)F(o) ATP synthase for ATP synthesis, the bloodstream form relies on ATP hydrolysis by F(1)F(o) ATP synthase to maintain its mitochondrial membrane potential. This Trypanosoma brucei brucei protein is ATP synthase subunit delta, mitochondrial.